The primary structure comprises 247 residues: D-alanyl-D-alanine dipeptidase (247 aa).

H140 and D147 together coordinate Zn(2+). E215 functions as the Proton donor/acceptor in the catalytic mechanism. H218 is a Zn(2+) binding site.

Belongs to the peptidase M15D family. It depends on Zn(2+) as a cofactor.

The protein localises to the cytoplasm. The catalysed reaction is D-alanyl-D-alanine + H2O = 2 D-alanine. Functionally, catalyzes hydrolysis of the D-alanyl-D-alanine dipeptide. May have a role in cell-wall turnover. The sequence is that of D-alanyl-D-alanine dipeptidase from Synechocystis sp. (strain ATCC 27184 / PCC 6803 / Kazusa).